We begin with the raw amino-acid sequence, 181 residues long: ATP synthase subunit b (181 aa).

Residues 16–36 (LIPPIPELVIGLIAFVIVFGF) traverse the membrane as a helical segment.

It belongs to the ATPase B chain family. In terms of assembly, F-type ATPases have 2 components, F(1) - the catalytic core - and F(0) - the membrane proton channel. F(1) has five subunits: alpha(3), beta(3), gamma(1), delta(1), epsilon(1). F(0) has three main subunits: a(1), b(2) and c(10-14). The alpha and beta chains form an alternating ring which encloses part of the gamma chain. F(1) is attached to F(0) by a central stalk formed by the gamma and epsilon chains, while a peripheral stalk is formed by the delta and b chains.

Its subcellular location is the cell membrane. Functionally, f(1)F(0) ATP synthase produces ATP from ADP in the presence of a proton or sodium gradient. F-type ATPases consist of two structural domains, F(1) containing the extramembraneous catalytic core and F(0) containing the membrane proton channel, linked together by a central stalk and a peripheral stalk. During catalysis, ATP synthesis in the catalytic domain of F(1) is coupled via a rotary mechanism of the central stalk subunits to proton translocation. In terms of biological role, component of the F(0) channel, it forms part of the peripheral stalk, linking F(1) to F(0). The sequence is that of ATP synthase subunit b from Streptomyces lividans.